The following is a 262-amino-acid chain: Hydroxyethylthiazole kinase (262 aa).

Met-41 lines the substrate pocket. Residues Arg-117 and Ser-163 each contribute to the ATP site. Gly-190 is a substrate binding site.

This sequence belongs to the Thz kinase family. Mg(2+) is required as a cofactor.

The catalysed reaction is 5-(2-hydroxyethyl)-4-methylthiazole + ATP = 4-methyl-5-(2-phosphooxyethyl)-thiazole + ADP + H(+). It participates in cofactor biosynthesis; thiamine diphosphate biosynthesis; 4-methyl-5-(2-phosphoethyl)-thiazole from 5-(2-hydroxyethyl)-4-methylthiazole: step 1/1. Its function is as follows. Catalyzes the phosphorylation of the hydroxyl group of 4-methyl-5-beta-hydroxyethylthiazole (THZ). This chain is Hydroxyethylthiazole kinase, found in Levilactobacillus brevis (strain ATCC 367 / BCRC 12310 / CIP 105137 / JCM 1170 / LMG 11437 / NCIMB 947 / NCTC 947) (Lactobacillus brevis).